We begin with the raw amino-acid sequence, 516 residues long: L-amino-acid oxidase (516 aa).

Residues 1–18 form the signal peptide; sequence MNVFFMFSLLFLAALGSC. Cysteine 28 and cysteine 189 are disulfide-bonded. FAD contacts are provided by residues 61 to 62, 81 to 82, arginine 89, and 103 to 106; these read MA, EA, and GPMR. 2 residues coordinate substrate: arginine 106 and histidine 239. Valine 279 contacts FAD. Cysteine 349 and cysteine 430 are disulfide-bonded. Asparagine 379 carries N-linked (GlcNAc...) asparagine glycosylation. Tyrosine 390 contacts substrate. Residues glutamate 475 and 482–487 contribute to the FAD site; that span reads GWIDST. Substrate is bound at residue 482–483; it reads GW.

The protein belongs to the flavin monoamine oxidase family. FIG1 subfamily. As to quaternary structure, homodimer; non-covalently linked. Requires FAD as cofactor. In terms of tissue distribution, expressed by the venom gland.

The protein localises to the secreted. The catalysed reaction is an L-alpha-amino acid + O2 + H2O = a 2-oxocarboxylate + H2O2 + NH4(+). Functionally, catalyzes an oxidative deamination of predominantly hydrophobic and aromatic L-amino acids, thus producing hydrogen peroxide that may contribute to the diverse toxic effects of this enzyme. Exhibits diverse biological activities, such as hemolysis, edema, hemorrhage, apoptosis, antibacterial and antiparasitic activities, as well as regulation of platelet aggregation. Effects of snake L-amino oxidases on platelets are controversial, since they either induce aggregation or inhibit agonist-induced aggregation. These different effects are probably due to different experimental conditions. The chain is L-amino-acid oxidase from Crotalus adamanteus (Eastern diamondback rattlesnake).